Consider the following 255-residue polypeptide: Imidazole glycerol phosphate synthase subunit HisF (255 aa).

Active-site residues include D11 and D130.

This sequence belongs to the HisA/HisF family. As to quaternary structure, heterodimer of HisH and HisF.

It localises to the cytoplasm. It carries out the reaction 5-[(5-phospho-1-deoxy-D-ribulos-1-ylimino)methylamino]-1-(5-phospho-beta-D-ribosyl)imidazole-4-carboxamide + L-glutamine = D-erythro-1-(imidazol-4-yl)glycerol 3-phosphate + 5-amino-1-(5-phospho-beta-D-ribosyl)imidazole-4-carboxamide + L-glutamate + H(+). It participates in amino-acid biosynthesis; L-histidine biosynthesis; L-histidine from 5-phospho-alpha-D-ribose 1-diphosphate: step 5/9. Functionally, IGPS catalyzes the conversion of PRFAR and glutamine to IGP, AICAR and glutamate. The HisF subunit catalyzes the cyclization activity that produces IGP and AICAR from PRFAR using the ammonia provided by the HisH subunit. This Rhodopseudomonas palustris (strain ATCC BAA-98 / CGA009) protein is Imidazole glycerol phosphate synthase subunit HisF.